The chain runs to 285 residues: Bifunctional protein FolD (285 aa).

NADP(+)-binding positions include 166 to 168 (GAS) and isoleucine 232.

It belongs to the tetrahydrofolate dehydrogenase/cyclohydrolase family. Homodimer.

It catalyses the reaction (6R)-5,10-methylene-5,6,7,8-tetrahydrofolate + NADP(+) = (6R)-5,10-methenyltetrahydrofolate + NADPH. The enzyme catalyses (6R)-5,10-methenyltetrahydrofolate + H2O = (6R)-10-formyltetrahydrofolate + H(+). It functions in the pathway one-carbon metabolism; tetrahydrofolate interconversion. Its function is as follows. Catalyzes the oxidation of 5,10-methylenetetrahydrofolate to 5,10-methenyltetrahydrofolate and then the hydrolysis of 5,10-methenyltetrahydrofolate to 10-formyltetrahydrofolate. The polypeptide is Bifunctional protein FolD (Actinobacillus succinogenes (strain ATCC 55618 / DSM 22257 / CCUG 43843 / 130Z)).